The sequence spans 283 residues: Probable endonuclease 4 (283 aa).

The Zn(2+) site is built by H69, H109, E145, D179, H182, H216, D229, H231, and E261.

It belongs to the AP endonuclease 2 family. It depends on Zn(2+) as a cofactor.

The catalysed reaction is Endonucleolytic cleavage to 5'-phosphooligonucleotide end-products.. Endonuclease IV plays a role in DNA repair. It cleaves phosphodiester bonds at apurinic or apyrimidinic (AP) sites, generating a 3'-hydroxyl group and a 5'-terminal sugar phosphate. This is Probable endonuclease 4 from Campylobacter concisus (strain 13826).